A 1158-amino-acid chain; its full sequence is ATP-dependent helicase/deoxyribonuclease subunit B (1158 aa).

This sequence belongs to the helicase family. AddB/RexB type 2 subfamily. Heterodimer of AddA and RexB. It depends on Mg(2+) as a cofactor.

The heterodimer acts as both an ATP-dependent DNA helicase and an ATP-dependent, dual-direction single-stranded exonuclease. Recognizes the chi site generating a DNA molecule suitable for the initiation of homologous recombination. This subunit has 5' -&gt; 3' nuclease activity but not helicase activity. This is ATP-dependent helicase/deoxyribonuclease subunit B from Lactobacillus gasseri (strain ATCC 33323 / DSM 20243 / BCRC 14619 / CIP 102991 / JCM 1131 / KCTC 3163 / NCIMB 11718 / NCTC 13722 / AM63).